The primary structure comprises 453 residues: Trigger factor (453 aa).

One can recognise a PPIase FKBP-type domain in the interval 171–256 (GDRVTVSFKG…ATKVEAPQDV (86 aa)).

Belongs to the FKBP-type PPIase family. Tig subfamily.

Its subcellular location is the cytoplasm. It carries out the reaction [protein]-peptidylproline (omega=180) = [protein]-peptidylproline (omega=0). Involved in protein export. Acts as a chaperone by maintaining the newly synthesized protein in an open conformation. Functions as a peptidyl-prolyl cis-trans isomerase. The sequence is that of Trigger factor from Rhodopseudomonas palustris (strain BisB5).